The chain runs to 952 residues: Lysosomal alpha-glucosidase (952 aa).

A signal peptide spans 1–27 (MGVRHPPCSHRLLAVCALVSLATAALL). Positions 28 to 69 (GHILLHDFLLVPRELSGSSPVLEETHPAHQQGASRPGPRDAQ) are excised as a propeptide. The tract at residues 47–82 (PVLEETHPAHQQGASRPGPRDAQAHPGRPRAVPTQC) is disordered. Residues 80–131 (TQCDVPPNSRFDCAPDKAITQEQCEARGCCYIPAKQGLQGAQMGQPWCFFPP) enclose the P-type domain. Intrachain disulfides connect cysteine 82–cysteine 109, cysteine 92–cysteine 108, and cysteine 103–cysteine 127. Asparagine 140, asparagine 233, and asparagine 390 each carry an N-linked (GlcNAc...) asparagine glycan. Aspartate 404 is a binding site for substrate. Asparagine 470 carries an N-linked (GlcNAc...) asparagine glycan. The Nucleophile role is filled by aspartate 518. The active site involves glutamate 521. Cysteine 533 and cysteine 558 are oxidised to a cystine. Substrate contacts are provided by arginine 600 and aspartate 616. Cysteine 647 and cysteine 658 are oxidised to a cystine. Residue asparagine 652 is glycosylated (N-linked (GlcNAc...) asparagine). Histidine 674 serves as a coordination point for substrate. N-linked (GlcNAc...) asparagine glycans are attached at residues asparagine 882 and asparagine 925.

It belongs to the glycosyl hydrolase 31 family. Post-translationally, the different forms of acid glucosidase are obtained by proteolytic processing. Phosphorylation of mannose residues ensures efficient transport of the enzyme to the lysosomes via the mannose 6-phosphate receptor.

The protein localises to the lysosome. It localises to the lysosome membrane. The catalysed reaction is Hydrolysis of terminal, non-reducing (1-&gt;4)-linked alpha-D-glucose residues with release of alpha-D-glucose.. In terms of biological role, essential for the degradation of glycogen in lysosomes. Has highest activity on alpha-1,4-linked glycosidic linkages, but can also hydrolyze alpha-1,6-linked glucans. In Homo sapiens (Human), this protein is Lysosomal alpha-glucosidase (GAA).